We begin with the raw amino-acid sequence, 613 residues long: MKSLNDLPAPKSTTTTYYDHSNDAWFKNRVTESETVKSSSIKFKVVPAYLNRQGLRPKNPEDFGDGGAFPEIHLPQYPLLMGKNKSNKPGAKTLPVTVDAQGNVVFDAIVRQNENSRKIVYSQHKDIIPKFLKNEGDLGTVVDEEEELQKEIQETAEETKAAIEKIVNVRLSAAQPSNIARQSGDSQYIKYKPSQQSSAFNSGAKERIIRMVEMPVDPLDPPKFKHKRVPRASGSPPVPVMHSPPRPVTVKDQQDWKIPPCISNWKNPKGYTIPLDKRLAADGRGLQDVQINDNFAKLSEALYVAEQKAREAVSMRSKVQKEMVMKDKERKEQELRALAQKARSERTGAAMSMPVSSDRGRSESVDPRGDYDNYDQDRGREREREEPQETREEREKRIQREKIREERRRERERERRLDAKDAAMGKKSKITRDRDRDISEKVALGMASTGGKGGGEVMYDQRLFNQDKGMDSGFAADDQYNLYDKGLFTAQPTLSTLYKPKKDNDEEMYGNADEQLDKIKNTERFKPDKAFTGASERVGSKRDRPVEFEKEEEQDPFGLEKWVSDLKKGKKPLDKIGSGGTMRASGGGGSSSRDDDHGGSGRTKINFERSDRR.

Residues 135–170 adopt a coiled-coil conformation; it reads EGDLGTVVDEEEELQKEIQETAEETKAAIEKIVNVR. The segment at 186 to 350 is SNW; it reads SQYIKYKPSQ…KARSERTGAA (165 aa). Disordered regions lie at residues 219-252, 315-437, and 513-613; these read LDPP…TVKD, MRSK…RDRD, and DEQL…SDRR. Phosphoserine occurs at positions 235 and 243. Residues 236–247 are compositionally biased toward pro residues; that stretch reads PPVPVMHSPPRP. Basic and acidic residues-rich tracts occupy residues 315-335, 358-437, 515-529, 538-548, and 562-574; these read MRSK…EQEL, DRGR…RDRD, QLDK…KPDK, VGSKRDRPVEF, and WVSD…KPLD. Coiled-coil stretches lie at residues 318 to 349 and 391 to 421; these read KVQK…RTGA and REER…DAKD. The span at 577–590 shows a compositional bias: gly residues; it reads GSGGTMRASGGGGS. A compositionally biased stretch (basic and acidic residues) spans 592–613; sequence SRDDDHGGSGRTKINFERSDRR.

Belongs to the SNW family. In terms of assembly, component of the spliceosome. Interacts with SR45. Expressed in roots, stems, seedlings, siliques, cotyledons, leaves, inflorescences, seeds and shoot apical meristem.

The protein resides in the nucleus speckle. Functionally, splicing factor involved in post-transcriptional regulation of circadian clock and flowering time genes. Associates with the pre-mRNA of PRR7, PRR9, ELF3 and GI, and is necessary for the regulation of their alternative splicing and mRNA maturation. Probably involved in splice site recognition. This is SNW/SKI-interacting protein (SKIP) from Arabidopsis thaliana (Mouse-ear cress).